The sequence spans 893 residues: Flippase kinase 1 (893 aa).

Residues 1–23 (MAGHHHEHEQERDHEQEHEHDSL) are compositionally biased toward basic and acidic residues. 3 disordered regions span residues 1-124 (MAGH…SSKL), 129-148 (PMTS…PTIP), and 163-243 (QHEH…ERAG). Polar residues predominate over residues 24–42 (QRPTTGSERTRSISFSKLL). The segment covering 49–62 (NASSSNNMSVSSVN) has biased composition (low complexity). A compositionally biased stretch (polar residues) spans 76-87 (NNSGSEGQSSRF). Residues 96 to 122 (SGNSSKNASAHNSSQSSLEGDSASSSS) show a composition bias toward low complexity. Residues Ser140, Ser144, Ser171, Ser175, and Ser185 each carry the phosphoserine modification. Over residues 206-216 (SQNSNNSSSTS) the composition is skewed to low complexity. Positions 228–237 (GSQGFSSNNP) are enriched in polar residues. Ser300 is subject to Phosphoserine. Over residues 334–355 (DTLNGSPSRGSSKSPTITQTFP) the composition is skewed to polar residues. Residues 334 to 480 (DTLNGSPSRG…PRRSRRLRTK (147 aa)) form a disordered region. Positions 370-380 (NNDKHDEKEEQ) are enriched in basic and acidic residues. Over residues 381 to 399 (QTTTDNKTRNLSPTKQNGK) the composition is skewed to polar residues. Ser414 carries the phosphoserine modification. Positions 422 to 439 (ASATSPTSSSARKTSGSS) are enriched in low complexity. Ser462 bears the Phosphoserine mark. One can recognise a Protein kinase domain in the interval 496 to 777 (FEKIRLLGQG…AADVKKHPFF (282 aa)). ATP contacts are provided by residues 502 to 510 (LGQGDVGKV) and Lys525. Asp621 serves as the catalytic Proton acceptor. One can recognise an AGC-kinase C-terminal domain in the interval 778 to 861 (KKVQWSLLRN…MSLMEQDNNS (84 aa)). A disordered region spans residues 874–893 (AYTPNSNRSRSNSHRTFFKR). The segment covering 884–893 (SNSHRTFFKR) has biased composition (basic residues).

Belongs to the protein kinase superfamily. Ser/Thr protein kinase family. KIN82 subfamily. In terms of processing, the N-terminal non-catalytic domain is phosphorylated by YPK1.

The protein resides in the cytoplasm. Its subcellular location is the cell membrane. The catalysed reaction is L-seryl-[protein] + ATP = O-phospho-L-seryl-[protein] + ADP + H(+). It catalyses the reaction L-threonyl-[protein] + ATP = O-phospho-L-threonyl-[protein] + ADP + H(+). Its activity is regulated as follows. Down-regulated by YKP1 phosphorylation. This effect is counteracted in the presence of mannosyl-inositolphosphorylceramide (MIPC). Its function is as follows. Flippase activator that phosphorylates DNF1 and DNF2 and which is involved in the generation of phospholipid asymmetry in membranes by the inward translocation of phospholipids and in the retrieval pathway from early endosomes to the trans-Golgi network (TGN). Also phosphorylates the N-terminal half of YPK1. Involved in pheromone-response. This is Flippase kinase 1 (FPK1) from Saccharomyces cerevisiae (strain ATCC 204508 / S288c) (Baker's yeast).